A 72-amino-acid polypeptide reads, in one-letter code: Translation initiation factor IF-1 2 (72 aa).

One can recognise an S1-like domain in the interval 1 to 72 (MAKEDAIEVD…KRGRITYRMK (72 aa)).

Belongs to the IF-1 family. In terms of assembly, component of the 30S ribosomal translation pre-initiation complex which assembles on the 30S ribosome in the order IF-2 and IF-3, IF-1 and N-formylmethionyl-tRNA(fMet); mRNA recruitment can occur at any time during PIC assembly.

It is found in the cytoplasm. Its function is as follows. One of the essential components for the initiation of protein synthesis. Stabilizes the binding of IF-2 and IF-3 on the 30S subunit to which N-formylmethionyl-tRNA(fMet) subsequently binds. Helps modulate mRNA selection, yielding the 30S pre-initiation complex (PIC). Upon addition of the 50S ribosomal subunit IF-1, IF-2 and IF-3 are released leaving the mature 70S translation initiation complex. The protein is Translation initiation factor IF-1 2 of Nitratidesulfovibrio vulgaris (strain DP4) (Desulfovibrio vulgaris).